The chain runs to 104 residues: MAIVKVTDSNFDDNIQSGVNLVDFWATWCGPCKMIAPVLEELAGDYDGKANILKLDVDENPSTAAKFEVMSIPTLIVFKDGEPVDKVVGFQPKENLAEVIEKHL.

The 103-residue stretch at 2–104 (AIVKVTDSNF…NLAEVIEKHL (103 aa)) folds into the Thioredoxin domain. Cys-29 and Cys-32 form a disulfide bridge.

Belongs to the thioredoxin family.

Component of the thioredoxin-thioredoxin reductase system. Participates in various redox reactions through the reversible oxidation of its active center dithiol to a disulfide and catalyzes dithiol-disulfide exchange reactions. This Staphylococcus saprophyticus subsp. saprophyticus (strain ATCC 15305 / DSM 20229 / NCIMB 8711 / NCTC 7292 / S-41) protein is Thioredoxin (trxA).